We begin with the raw amino-acid sequence, 210 residues long: Probable GTP-binding protein EngB (210 aa).

The region spanning 25–199 (TGIEVAFAGR…RQKLDSWFNE (175 aa)) is the EngB-type G domain. GTP-binding positions include 33–40 (GRSNAGKS), 60–64 (GRTQL), 78–81 (DLPG), 145–148 (TKAD), and 178–180 (FSS). Mg(2+)-binding residues include Ser-40 and Thr-62.

The protein belongs to the TRAFAC class TrmE-Era-EngA-EngB-Septin-like GTPase superfamily. EngB GTPase family. Requires Mg(2+) as cofactor.

Functionally, necessary for normal cell division and for the maintenance of normal septation. In Klebsiella pneumoniae subsp. pneumoniae (strain ATCC 700721 / MGH 78578), this protein is Probable GTP-binding protein EngB.